We begin with the raw amino-acid sequence, 513 residues long: ATP synthase subunit alpha (513 aa).

169–176 (GDRQTGKT) contributes to the ATP binding site.

It belongs to the ATPase alpha/beta chains family. In terms of assembly, F-type ATPases have 2 components, CF(1) - the catalytic core - and CF(0) - the membrane proton channel. CF(1) has five subunits: alpha(3), beta(3), gamma(1), delta(1), epsilon(1). CF(0) has three main subunits: a(1), b(2) and c(9-12). The alpha and beta chains form an alternating ring which encloses part of the gamma chain. CF(1) is attached to CF(0) by a central stalk formed by the gamma and epsilon chains, while a peripheral stalk is formed by the delta and b chains.

The protein localises to the cell inner membrane. It carries out the reaction ATP + H2O + 4 H(+)(in) = ADP + phosphate + 5 H(+)(out). Its function is as follows. Produces ATP from ADP in the presence of a proton gradient across the membrane. The alpha chain is a regulatory subunit. The polypeptide is ATP synthase subunit alpha (Cupriavidus necator (strain ATCC 17699 / DSM 428 / KCTC 22496 / NCIMB 10442 / H16 / Stanier 337) (Ralstonia eutropha)).